A 270-amino-acid polypeptide reads, in one-letter code: Cross-pathway control protein 1 (270 aa).

Disordered stretches follow at residues 114 to 135 (QAQAQVQTQPQTQTQTEQQTQP) and 153 to 213 (QTVH…IIVE). Residues 184 to 195 (SVSPPSGRHSSV) are compositionally biased toward low complexity. The 55-residue stretch at 216-270 (SDVVAMKRARNTLAARKSRERKAQRLEELEAKIEELIAERDRWKNLALAHGASTE) folds into the bZIP domain. Positions 222–240 (KRARNTLAARKSRERKAQR) are basic motif. Residues 241 to 248 (LEELEAKI) are leucine-zipper.

It belongs to the bZIP family. GCN4 subfamily. As to quaternary structure, binds DNA as a dimer.

It is found in the nucleus. In terms of biological role, in N.crassa grown under amino acid starvation conditions, this protein is required for increasing the transcription of the genes coding for many amino acid biosynthetic pathways enzymes. This transcription factor binds and recognize the DNA sequence: 5'-TGACTC-3'. The sequence is that of Cross-pathway control protein 1 (cpc-1) from Neurospora crassa (strain ATCC 24698 / 74-OR23-1A / CBS 708.71 / DSM 1257 / FGSC 987).